A 163-amino-acid polypeptide reads, in one-letter code: 2-C-methyl-D-erythritol 2,4-cyclodiphosphate synthase (163 aa).

Asp10 and His12 together coordinate a divalent metal cation. Residues 10-12 and 36-37 each bind 4-CDP-2-C-methyl-D-erythritol 2-phosphate; these read DVH and HS. His44 is a binding site for a divalent metal cation. 4-CDP-2-C-methyl-D-erythritol 2-phosphate-binding positions include 58–60, 63–67, 134–137, Phe141, and Arg144; these read DIG, FPDND, and TTTE.

It belongs to the IspF family. Homotrimer. Requires a divalent metal cation as cofactor.

The enzyme catalyses 4-CDP-2-C-methyl-D-erythritol 2-phosphate = 2-C-methyl-D-erythritol 2,4-cyclic diphosphate + CMP. It participates in isoprenoid biosynthesis; isopentenyl diphosphate biosynthesis via DXP pathway; isopentenyl diphosphate from 1-deoxy-D-xylulose 5-phosphate: step 4/6. In terms of biological role, involved in the biosynthesis of isopentenyl diphosphate (IPP) and dimethylallyl diphosphate (DMAPP), two major building blocks of isoprenoid compounds. Catalyzes the conversion of 4-diphosphocytidyl-2-C-methyl-D-erythritol 2-phosphate (CDP-ME2P) to 2-C-methyl-D-erythritol 2,4-cyclodiphosphate (ME-CPP) with a corresponding release of cytidine 5-monophosphate (CMP). This Carboxydothermus hydrogenoformans (strain ATCC BAA-161 / DSM 6008 / Z-2901) protein is 2-C-methyl-D-erythritol 2,4-cyclodiphosphate synthase.